The primary structure comprises 581 residues: Protein SPT2 homolog (581 aa).

Over residues 26-35 (YYSTKYSPPK) the composition is skewed to low complexity. Disordered stretches follow at residues 26–50 (YYST…NIQK) and 145–495 (QEDK…EYDS). Residues 36–76 (KQSKESKQLSSNIQKFLQKKEAEEAEKKRLERQKLNDLLAK) are a coiled coil. A compositionally biased stretch (basic and acidic residues) spans 162–181 (SGTKERVKAAITREREEAKG). Composition is skewed to polar residues over residues 182–197 (NTRQ…SSAT) and 204–213 (VARSYSTSKT). Composition is skewed to basic and acidic residues over residues 218–236 (NAEK…EQRR) and 256–312 (LAEK…KETP). Positions 276–307 (ERLLSAREKRELEERQRQQEQRAQRLKMRESE) form a coiled coil. Residues 352 to 376 (SSASSTSLSSSNSHSSASRSSVSSS) show a composition bias toward low complexity. The segment covering 447-461 (TRQTPSSDVQRSQGG) has biased composition (polar residues). A compositionally biased stretch (acidic residues) spans 486-495 (DDDDEDEYDS).

It belongs to the SPT2 family.

The chain is Protein SPT2 homolog from Drosophila melanogaster (Fruit fly).